Consider the following 94-residue polypeptide: Neutrophil antibiotic peptide NP-1 (94 aa).

The signal sequence occupies residues 1-19; the sequence is MRTLTLLTALLLLALHTQA. A propeptide spanning residues 20-62 is cleaved from the precursor; that stretch reads KSPQGTAEEAPDQEQLVMEDQDISISFGGDKGTALQDADVKAG. Disulfide bonds link Cys-65-Cys-93, Cys-67-Cys-82, and Cys-72-Cys-92. The residue at position 84 (Tyr-84) is a Phosphotyrosine.

This sequence belongs to the alpha-defensin family. In terms of tissue distribution, highest expression in bone marrow and to a much lesser extent in small intestine.

It is found in the secreted. In terms of biological role, active in vitro against S.aureus, fungi, Gram-positive and Gram-negative bacteria and to a lesser extent against an enveloped virus. This is Neutrophil antibiotic peptide NP-1 from Rattus norvegicus (Rat).